Reading from the N-terminus, the 546-residue chain is Probable lysosomal cobalamin transporter (546 aa).

4 helical membrane passes run 8–28 (LAQG…FSWF), 48–68 (IIAL…IFLV), 102–122 (ILYA…YFFF), and 141–161 (YSIG…FAPL). An N-linked (GlcNAc...) asparagine glycan is attached at N167. A run of 4 helical transmembrane segments spans residues 189 to 209 (TALS…MITY), 304 to 324 (MVFG…LFIT), 352 to 372 (IIMV…LLVV), and 407 to 427 (ALLF…VMLF). N-linked (GlcNAc...) asparagine glycosylation is found at N444, N452, and N459. Residues 495–515 (VWFFGACYYWGTWLFLVVFMT) traverse the membrane as a helical segment.

Belongs to the LIMR family. LMBRD1 subfamily.

Its subcellular location is the lysosome membrane. Functionally, probable lysosomal cobalamin transporter. Required to export cobalamin from lysosomes allowing its conversion to cofactors. This Nematostella vectensis (Starlet sea anemone) protein is Probable lysosomal cobalamin transporter.